The sequence spans 337 residues: MVVKVGINGFGRIGRIVFRNAIEHNDVDIVAVNDPFIEPHYAAYMLKYDSTHGQFKGDIKVDGNNLTVNGKTIRFHMEKDPANIPWSETGAYYVVESTGVFTTTEKAKAHLKGGAKKVVISAPSPDAPMFVMGVNHETYKPDIEALSNASCTTNCLAPLAKVIHDKYTIIEGLMTTIHSYTATQKVVDGPSAKDWRGGRTAAQNIIPSSTGAAKAVGKVIPELNGKLTGMAMRVPTANVSVVDLTVRIEKGASYDEIKQAVKEASEGSLNGILGYTEDDIVSTDLNGDNRSSIFDAKAGISLNKNFVKLVSWYDNEWGYSRRVLDLLVYIAKIDGNA.

Residues 12-13 (RI), Asp34, and Lys79 contribute to the NAD(+) site. D-glyceraldehyde 3-phosphate-binding positions include 150–152 (SCT), Thr181, 210–211 (TG), and Arg233. Cys151 serves as the catalytic Nucleophile. Asn315 serves as a coordination point for NAD(+).

Belongs to the glyceraldehyde-3-phosphate dehydrogenase family. As to quaternary structure, homotetramer.

The protein localises to the cytoplasm. The enzyme catalyses D-glyceraldehyde 3-phosphate + phosphate + NAD(+) = (2R)-3-phospho-glyceroyl phosphate + NADH + H(+). It functions in the pathway carbohydrate degradation; glycolysis; pyruvate from D-glyceraldehyde 3-phosphate: step 1/5. This is Glyceraldehyde-3-phosphate dehydrogenase (GPD1) from Cochliobolus heterostrophus (Southern corn leaf blight fungus).